A 71-amino-acid polypeptide reads, in one-letter code: SPbeta prophage-derived uncharacterized protein YopF (71 aa).

This is SPbeta prophage-derived uncharacterized protein YopF (yopF) from Bacillus subtilis (strain 168).